Here is an 875-residue protein sequence, read N- to C-terminus: Leucine--tRNA ligase (875 aa).

Residues 57–67 (PYPSGQIHMGH) carry the 'HIGH' region motif. The short motif at 631–635 (KMSKS) is the 'KMSKS' region element. K634 provides a ligand contact to ATP.

It belongs to the class-I aminoacyl-tRNA synthetase family.

The protein resides in the cytoplasm. It catalyses the reaction tRNA(Leu) + L-leucine + ATP = L-leucyl-tRNA(Leu) + AMP + diphosphate. This is Leucine--tRNA ligase from Granulibacter bethesdensis (strain ATCC BAA-1260 / CGDNIH1).